The following is a 429-amino-acid chain: Serine--tRNA ligase (429 aa).

Threonine 236–glutamate 238 contacts L-serine. Arginine 267–glutamate 269 is a binding site for ATP. Glutamate 290 contributes to the L-serine binding site. Glutamate 354 to serine 357 provides a ligand contact to ATP. An L-serine-binding site is contributed by serine 390.

It belongs to the class-II aminoacyl-tRNA synthetase family. Type-1 seryl-tRNA synthetase subfamily. Homodimer. The tRNA molecule binds across the dimer.

It localises to the cytoplasm. The catalysed reaction is tRNA(Ser) + L-serine + ATP = L-seryl-tRNA(Ser) + AMP + diphosphate + H(+). The enzyme catalyses tRNA(Sec) + L-serine + ATP = L-seryl-tRNA(Sec) + AMP + diphosphate + H(+). The protein operates within aminoacyl-tRNA biosynthesis; selenocysteinyl-tRNA(Sec) biosynthesis; L-seryl-tRNA(Sec) from L-serine and tRNA(Sec): step 1/1. Functionally, catalyzes the attachment of serine to tRNA(Ser). Is also able to aminoacylate tRNA(Sec) with serine, to form the misacylated tRNA L-seryl-tRNA(Sec), which will be further converted into selenocysteinyl-tRNA(Sec). This is Serine--tRNA ligase from Gloeobacter violaceus (strain ATCC 29082 / PCC 7421).